The sequence spans 87 residues: Small ribosomal subunit protein bS20 (87 aa).

The disordered stretch occupies residues 1–27; sequence MANIKSAKKRAVQSEKRRKHNASRRSM.

It belongs to the bacterial ribosomal protein bS20 family.

Its function is as follows. Binds directly to 16S ribosomal RNA. The polypeptide is Small ribosomal subunit protein bS20 (Pectobacterium carotovorum subsp. carotovorum (strain PC1)).